A 252-amino-acid chain; its full sequence is uncharacterized protein (252 aa).

Residues 80-100 (LSVLVIGSTMFTHAGVLPVLA) form a helical membrane-spanning segment.

Its subcellular location is the host membrane. It localises to the virion. This is an uncharacterized protein from Acanthamoeba polyphaga mimivirus (APMV).